A 461-amino-acid chain; its full sequence is Protein IQ-DOMAIN 2 (461 aa).

Residues 1–55 (MGKKAKWFSSVKKAFSPDSKKSKQKLAEGQNGVISNPPVVDNVRQSSSSPPPALA) are disordered. The IQ domain occupies 114–142 (EEAAAILIQTIFRGYLARRALRAMRGLVR). Positions 141–158 (VRLKLLMEGSVVKRQAAN) are calmodulin-binding. The interval 278-461 (PLESSEKEQS…GVTVTNGAGS (184 aa)) is disordered. The span at 310-345 (LTRNGSTQPNTPSSARGTPRNKNSFFSPPTPSRLNQ) shows a compositional bias: polar residues. Positions 425-432 (KKRLSYPT) match the Nuclear localization signal motif.

This sequence belongs to the IQD family. Binds to multiple calmodulin (CaM) in the presence of Ca(2+) and CaM-like proteins.

Its subcellular location is the nucleus. The protein localises to the cytoplasm. It is found in the cytoskeleton. Functionally, may be involved in cooperative interactions with calmodulins or calmodulin-like proteins. Recruits calmodulin proteins to microtubules, thus being a potential scaffold in cellular signaling and trafficking. May associate with nucleic acids and regulate gene expression at the transcriptional or post-transcriptional level. The polypeptide is Protein IQ-DOMAIN 2 (Arabidopsis thaliana (Mouse-ear cress)).